The following is a 1008-amino-acid chain: Translation initiation factor IF-2 (1008 aa).

Disordered regions lie at residues 113 to 136, 153 to 235, and 253 to 405; these read AVTA…KGNV, DKDS…PAAP, and GLTV…YRKD. Basic and acidic residues-rich tracts occupy residues 153–180 and 189–213; these read DKDS…KAKP and PKPE…KAET. Composition is skewed to low complexity over residues 294–329 and 342–358; these read GPNK…PRPQ and GGPN…SNGP. The span at 365–381 shows a compositional bias: basic and acidic residues; that stretch reads ASEKGEVTGKQIQDKIK. Positions 507–677 constitute a tr-type G domain; it reads DRAPIVTIMG…LLEAEMLELK (171 aa). Residues 516-523 are G1; it reads GHVDHGKT. GTP is bound at residue 516–523; it reads GHVDHGKT. The tract at residues 541-545 is G2; it reads GITQH. The segment at 563–566 is G3; the sequence is DTPG. Residues 563 to 567 and 617 to 620 contribute to the GTP site; these read DTPGH and NKID. Residues 617–620 are G4; the sequence is NKID. Positions 653–655 are G5; sequence SAK.

Belongs to the TRAFAC class translation factor GTPase superfamily. Classic translation factor GTPase family. IF-2 subfamily.

It localises to the cytoplasm. One of the essential components for the initiation of protein synthesis. Protects formylmethionyl-tRNA from spontaneous hydrolysis and promotes its binding to the 30S ribosomal subunits. Also involved in the hydrolysis of GTP during the formation of the 70S ribosomal complex. The polypeptide is Translation initiation factor IF-2 (Cytophaga hutchinsonii (strain ATCC 33406 / DSM 1761 / CIP 103989 / NBRC 15051 / NCIMB 9469 / D465)).